The chain runs to 211 residues: Protein CHLORORESPIRATORY REDUCTION 41, chloroplastic (211 aa).

Residues Met1–Lys38 constitute a chloroplast transit peptide. The stretch at Ala136–Met163 forms a coiled coil.

Biogenesis factor component of the plastidial NDH subcomplex A.

It is found in the plastid. The protein localises to the chloroplast. The protein resides in the chloroplast stroma. Its function is as follows. Required for both formation and activity of the chloroplast NAD(P)H dehydrogenase (NDH) complex of the photosynthetic electron transport chain. Functions in assembly or stabilization of the NDH complex; probably involved, together with NdhO and NdhH, in the formation of an NDH subcomplex A assembly intermediate (NAI500). The sequence is that of Protein CHLORORESPIRATORY REDUCTION 41, chloroplastic from Arabidopsis thaliana (Mouse-ear cress).